The chain runs to 348 residues: Photosystem II protein D1 (348 aa).

3 helical membrane passes run 33 to 50, 122 to 137, and 146 to 160; these read YIGW…LATV, HFIF…EWEF, and WIFV…ASCA. A chlorophyll a-binding site is contributed by H122. A pheophytin a-binding site is contributed by W130. The [CaMn4O5] cluster site is built by D174 and E193. Residues 201–222 traverse the membrane as a helical segment; that stretch reads FHILGVAGVFGGSLFSAMHGSL. H202 is a chlorophyll a binding site. Residues H219 and 268-269 contribute to the a quinone site; that span reads SF. H219 is a binding site for Fe cation. Residue H276 coordinates Fe cation. A helical transmembrane segment spans residues 278-292; sequence FLAAWPVIGIWFTAL. Positions 336, 337, 346, and 348 each coordinate [CaMn4O5] cluster.

It belongs to the reaction center PufL/M/PsbA/D family. In terms of assembly, PSII is composed of 1 copy each of membrane proteins PsbA, PsbB, PsbC, PsbD, PsbE, PsbF, PsbH, PsbI, PsbJ, PsbK, PsbL, PsbM, PsbT, PsbX, PsbY, PsbZ, Psb30/Ycf12, at least 3 peripheral proteins of the oxygen-evolving complex and a large number of cofactors. It forms dimeric complexes. Requires The D1/D2 heterodimer binds P680, chlorophylls that are the primary electron donor of PSII, and subsequent electron acceptors. It shares a non-heme iron and each subunit binds pheophytin, quinone, additional chlorophylls, carotenoids and lipids. D1 provides most of the ligands for the Mn4-Ca-O5 cluster of the oxygen-evolving complex (OEC). There is also a Cl(-1) ion associated with D1 and D2, which is required for oxygen evolution. The PSII complex binds additional chlorophylls, carotenoids and specific lipids. as cofactor. In terms of processing, tyr-165 forms a radical intermediate that is referred to as redox-active TyrZ, YZ or Y-Z.

It is found in the plastid. It localises to the chloroplast thylakoid membrane. It carries out the reaction 2 a plastoquinone + 4 hnu + 2 H2O = 2 a plastoquinol + O2. In terms of biological role, photosystem II (PSII) is a light-driven water:plastoquinone oxidoreductase that uses light energy to abstract electrons from H(2)O, generating O(2) and a proton gradient subsequently used for ATP formation. It consists of a core antenna complex that captures photons, and an electron transfer chain that converts photonic excitation into a charge separation. The D1/D2 (PsbA/PsbD) reaction center heterodimer binds P680, the primary electron donor of PSII as well as several subsequent electron acceptors. The chain is Photosystem II protein D1 from Heterocapsa rotundata (Dinoflagellate).